We begin with the raw amino-acid sequence, 55 residues long: MPQLNPSPWFAIMVFSWFVFLIFLPPKIMAHTFPNEPTAQSTQTLKTKSWTWPWH.

Residues 9–29 (WFAIMVFSWFVFLIFLPPKIM) traverse the membrane as a helical segment.

Belongs to the ATPase protein 8 family. As to quaternary structure, component of the ATP synthase complex composed at least of ATP5F1A/subunit alpha, ATP5F1B/subunit beta, ATP5MC1/subunit c (homooctomer), MT-ATP6/subunit a, MT-ATP8/subunit 8, ATP5ME/subunit e, ATP5MF/subunit f, ATP5MG/subunit g, ATP5MK/subunit k, ATP5MJ/subunit j, ATP5F1C/subunit gamma, ATP5F1D/subunit delta, ATP5F1E/subunit epsilon, ATP5PF/subunit F6, ATP5PB/subunit b, ATP5PD/subunit d, ATP5PO/subunit OSCP. ATP synthase complex consists of a soluble F(1) head domain (subunits alpha(3) and beta(3)) - the catalytic core - and a membrane F(0) domain - the membrane proton channel (subunits c, a, 8, e, f, g, k and j). These two domains are linked by a central stalk (subunits gamma, delta, and epsilon) rotating inside the F1 region and a stationary peripheral stalk (subunits F6, b, d, and OSCP).

It is found in the mitochondrion membrane. Its function is as follows. Subunit 8, of the mitochondrial membrane ATP synthase complex (F(1)F(0) ATP synthase or Complex V) that produces ATP from ADP in the presence of a proton gradient across the membrane which is generated by electron transport complexes of the respiratory chain. ATP synthase complex consist of a soluble F(1) head domain - the catalytic core - and a membrane F(1) domain - the membrane proton channel. These two domains are linked by a central stalk rotating inside the F(1) region and a stationary peripheral stalk. During catalysis, ATP synthesis in the catalytic domain of F(1) is coupled via a rotary mechanism of the central stalk subunits to proton translocation. In vivo, can only synthesize ATP although its ATP hydrolase activity can be activated artificially in vitro. Part of the complex F(0) domain. This chain is ATP synthase F(0) complex subunit 8, found in Tetraodon nigroviridis (Spotted green pufferfish).